A 103-amino-acid polypeptide reads, in one-letter code: Large ribosomal subunit protein bL28 (103 aa).

It belongs to the bacterial ribosomal protein bL28 family.

The sequence is that of Large ribosomal subunit protein bL28 from Anaplasma marginale (strain St. Maries).